Here is a 119-residue protein sequence, read N- to C-terminus: Small ribosomal subunit protein bS16 (119 aa).

The segment covering 89 to 103 (TTKSTKEKAATDKKA) has biased composition (basic and acidic residues). The segment at 89 to 119 (TTKSTKEKAATDKKAKVTKKPKTKTTTDVKK) is disordered.

Belongs to the bacterial ribosomal protein bS16 family.

This Spiroplasma kunkelii protein is Small ribosomal subunit protein bS16.